A 608-amino-acid polypeptide reads, in one-letter code: Protein FAM151A (608 aa).

A helical membrane pass occupies residues 14–34; the sequence is WILAGSVTVTLVLAISLILGL. The segment covering 586-596 has biased composition (polar residues); the sequence is VSSNRPSSRIG. Residues 586-608 form a disordered region; the sequence is VSSNRPSSRIGPSSVEGFPGESR.

This sequence belongs to the menorin family.

It is found in the membrane. This chain is Protein FAM151A (Fam151a), found in Mus musculus (Mouse).